A 52-amino-acid chain; its full sequence is Movement protein TGBp3 (52 aa).

The Lumenal portion of the chain corresponds to 1-3 (MHE). Residues 4–21 (SHLVVILALLLLALWCLS) form a helical membrane-spanning segment. At 22 to 52 (TRPVQPSCHVEINGHSIIVTGNCWHSTQRPH) the chain is on the cytoplasmic side.

Belongs to the Tymovirales TGBp3 protein family.

The protein resides in the host endoplasmic reticulum membrane. In terms of biological role, plays a role in viral cell-to-cell propagation, by facilitating genome transport to neighboring plant cells through plasmosdesmata. May induce the formation of granular vesicles derived from the Endoplasmic reticulum, which align on actin filaments. The sequence is that of Movement protein TGBp3 from Foxtail mosaic virus.